We begin with the raw amino-acid sequence, 307 residues long: Ribosomal RNA small subunit methyltransferase H (307 aa).

Residues 33–35 (GGY), Asp-51, Phe-78, Asp-96, and Gln-103 each bind S-adenosyl-L-methionine.

It belongs to the methyltransferase superfamily. RsmH family.

The protein resides in the cytoplasm. It catalyses the reaction cytidine(1402) in 16S rRNA + S-adenosyl-L-methionine = N(4)-methylcytidine(1402) in 16S rRNA + S-adenosyl-L-homocysteine + H(+). Specifically methylates the N4 position of cytidine in position 1402 (C1402) of 16S rRNA. The polypeptide is Ribosomal RNA small subunit methyltransferase H (Rickettsia conorii (strain ATCC VR-613 / Malish 7)).